The sequence spans 162 residues: Putative 4-hydroxy-4-methyl-2-oxoglutarate aldolase (162 aa).

Substrate is bound by residues 75–78 (GDML) and arginine 97. A divalent metal cation is bound at residue aspartate 98.

It belongs to the class II aldolase/RraA-like family. In terms of assembly, homotrimer. It depends on a divalent metal cation as a cofactor.

The enzyme catalyses 4-hydroxy-4-methyl-2-oxoglutarate = 2 pyruvate. The catalysed reaction is oxaloacetate + H(+) = pyruvate + CO2. Functionally, catalyzes the aldol cleavage of 4-hydroxy-4-methyl-2-oxoglutarate (HMG) into 2 molecules of pyruvate. Also contains a secondary oxaloacetate (OAA) decarboxylase activity due to the common pyruvate enolate transition state formed following C-C bond cleavage in the retro-aldol and decarboxylation reactions. The chain is Putative 4-hydroxy-4-methyl-2-oxoglutarate aldolase from Ectopseudomonas mendocina (strain ymp) (Pseudomonas mendocina).